The primary structure comprises 421 residues: Subtilisin-like protease 2 (421 aa).

The first 16 residues, 1 to 16 (MQLLNFGLLLLPFVAG), serve as a signal peptide directing secretion. A propeptide spanning residues 17–122 (DLAPQPEPLL…VHPDQHVYLA (106 aa)) is cleaved from the precursor. The Inhibitor I9 domain occupies 36–122 (QYIVTLKEGL…VHPDQHVYLA (87 aa)). The 291-residue stretch at 131 to 421 (RWGLGYMSSK…ERKFTLPKYF (291 aa)) folds into the Peptidase S8 domain. Catalysis depends on charge relay system residues Asp169 and His201. Residues Asn248, Asn261, and Asn348 are each glycosylated (N-linked (GlcNAc...) asparagine). Ser357 serves as the catalytic Charge relay system. Asn388 carries an N-linked (GlcNAc...) asparagine glycan.

It belongs to the peptidase S8 family.

The protein resides in the secreted. Functionally, secreted subtilisin-like serine protease with keratinolytic activity that contributes to pathogenicity. This Trichophyton tonsurans (Scalp ringworm fungus) protein is Subtilisin-like protease 2 (SUB2).